The primary structure comprises 232 residues: Lipoprotein-releasing system ATP-binding protein LolD 1 (232 aa).

One can recognise an ABC transporter domain in the interval 11 to 231 (VYLHDVKRQY…SIQDGLVVEL (221 aa)). 47 to 54 (APSGAGKS) is a binding site for ATP.

It belongs to the ABC transporter superfamily. Lipoprotein translocase (TC 3.A.1.125) family. The complex is composed of two ATP-binding proteins (LolD) and two transmembrane proteins (LolC and LolE).

The protein localises to the cell inner membrane. In terms of biological role, part of the ABC transporter complex LolCDE involved in the translocation of mature outer membrane-directed lipoproteins, from the inner membrane to the periplasmic chaperone, LolA. Responsible for the formation of the LolA-lipoprotein complex in an ATP-dependent manner. The protein is Lipoprotein-releasing system ATP-binding protein LolD 1 of Rhodopseudomonas palustris (strain BisB18).